The sequence spans 186 residues: uncharacterized protein (186 aa).

The signal sequence occupies residues 1–18 (MKKFFFAAALVVSGLLVG). A lipid anchor (N-palmitoyl cysteine) is attached at Cys19. Cys19 carries S-diacylglycerol cysteine lipidation.

The protein resides in the cell membrane. This is an uncharacterized protein from Salmonella typhimurium (strain LT2 / SGSC1412 / ATCC 700720).